The following is a 212-amino-acid chain: Cell division protein SepF (212 aa).

Positions 32–104 (RYADPDTSYD…APLGSDAHRE (73 aa)) are disordered. Over residues 64-73 (EAEEDGGDYG) the composition is skewed to acidic residues.

It belongs to the SepF family. As to quaternary structure, homodimer. Interacts with FtsZ.

It is found in the cytoplasm. Cell division protein that is part of the divisome complex and is recruited early to the Z-ring. Probably stimulates Z-ring formation, perhaps through the cross-linking of FtsZ protofilaments. Its function overlaps with FtsA. The protein is Cell division protein SepF of Saccharopolyspora erythraea (strain ATCC 11635 / DSM 40517 / JCM 4748 / NBRC 13426 / NCIMB 8594 / NRRL 2338).